The chain runs to 368 residues: Cobalt-precorrin-5B C(1)-methyltransferase (368 aa).

Belongs to the CbiD family.

The catalysed reaction is Co-precorrin-5B + S-adenosyl-L-methionine = Co-precorrin-6A + S-adenosyl-L-homocysteine. It functions in the pathway cofactor biosynthesis; adenosylcobalamin biosynthesis; cob(II)yrinate a,c-diamide from sirohydrochlorin (anaerobic route): step 6/10. Its function is as follows. Catalyzes the methylation of C-1 in cobalt-precorrin-5B to form cobalt-precorrin-6A. The sequence is that of Cobalt-precorrin-5B C(1)-methyltransferase from Brucella canis (strain ATCC 23365 / NCTC 10854 / RM-666).